A 547-amino-acid polypeptide reads, in one-letter code: Undecaprenyl phosphate-alpha-4-amino-4-deoxy-L-arabinose arabinosyl transferase (547 aa).

11 helical membrane-spanning segments follow: residues 1–21 (MKLTKWALPLFFLLFYLLPLD), 83–103 (FASAAATGLSALLIVWFALQL), 111–131 (FLAGLIYLSLLIVYGIGTYSV), 174–194 (FLTKGFIALAVPVIVIVPYVI), 205–225 (FGPLAMVSAALLAAPWAIAVH), 253–273 (APFWYYLPMGLLGTLPWLGLL), 286–306 (ISPETLYLLAWVVLPLLFFSV), 311–331 (LLTYILPCFAPLAMLLAASAV), 346–366 (AWLNGLFGLICLAVLAVLALS), 378–398 (GALAVAMVIFAGWALLGFIQL), and 408–428 (SALCPMVLAVGLPWALPQSLI).

It belongs to the glycosyltransferase 83 family.

Its subcellular location is the cell inner membrane. The enzyme catalyses 4-amino-4-deoxy-alpha-L-arabinopyranosyl di-trans,octa-cis-undecaprenyl phosphate + lipid IVA = lipid IIA + di-trans,octa-cis-undecaprenyl phosphate.. It participates in lipopolysaccharide metabolism; 4-amino-4-deoxy-beta-L-arabinose-lipid A biosynthesis. In terms of biological role, catalyzes the transfer of the L-Ara4N moiety of the glycolipid undecaprenyl phosphate-alpha-L-Ara4N to lipid A. The modified arabinose is attached to lipid A and is required for resistance to polymyxin and cationic antimicrobial peptides. This is Undecaprenyl phosphate-alpha-4-amino-4-deoxy-L-arabinose arabinosyl transferase from Aeromonas salmonicida (strain A449).